The chain runs to 192 residues: uncharacterized protein (192 aa).

The region spanning 29-160 (QRQAAVLIPV…PLDVYRRGNS (132 aa)) is the Nudix hydrolase domain. Positions 67–89 (GAVDSTDASLIAAALREAQEEVA) match the Nudix box motif. 2 residues coordinate Mg(2+): glutamate 83 and glutamate 87.

The protein belongs to the Nudix hydrolase family. PCD1 subfamily. The cofactor is Mn(2+). Mg(2+) is required as a cofactor.

Functionally, probably mediates the hydrolysis of some nucleoside diphosphate derivatives. This is an uncharacterized protein from Salmonella newport (strain SL254).